Here is a 500-residue protein sequence, read N- to C-terminus: Probable malate:quinone oxidoreductase (500 aa).

Belongs to the MQO family. FAD serves as cofactor.

It carries out the reaction (S)-malate + a quinone = a quinol + oxaloacetate. Its pathway is carbohydrate metabolism; tricarboxylic acid cycle; oxaloacetate from (S)-malate (quinone route): step 1/1. The chain is Probable malate:quinone oxidoreductase from Bacillus cereus (strain G9842).